The primary structure comprises 912 residues: Collagen alpha-2(I) chain (912 aa).

A compositionally biased stretch (low complexity) spans 1–41; the sequence is GPMGIMGPRGPPGASGAPGPQGFQGPAGEPGEPGQTGPAGA. 3 disordered regions span residues 1 to 206, 222 to 739, and 763 to 912; these read GPMG…GITG, IPGP…GIIG, and GPPG…RGSQ. The segment covering 43 to 57 has biased composition (basic and acidic residues); sequence AGEDGHPGKPGRPGE. 6 stretches are compositionally biased toward low complexity: residues 124-153, 178-192, 229-244, 295-327, 360-382, and 406-424; these read VGAPGPAGARGSDGSVGPVGPAGPIGSAGP, AGPRGEVGIPGISGP, PGPAGAAGATGARGIV, PGIRGIPGADGRAGVMGPAGSRGASGPAGVRGP, PVGIPGIDGRPGPIGPAGARGEP, and AGIAGARGAPGPDGNNGAQ. Over residues 431–440 the composition is skewed to gly residues; that stretch reads GVQGGKGEQG. Composition is skewed to low complexity over residues 474–501 and 517–532; these read IPGPAGARGPPGESGAAGPAGPIGSRGP and IGAPGTAGPSGPSGIP. The segment covering 539-548 has biased composition (gly residues); the sequence is GIPGGKGEIG. Low complexity-rich tracts occupy residues 549 to 612 and 622 to 637; these read NPGR…QPGA and NGPVGPTGPVGAAGPS. Over residues 647–656 the composition is skewed to gly residues; sequence GSRGDGGPPG. 5 stretches are compositionally biased toward low complexity: residues 658 to 667, 728 to 739, 763 to 785, 805 to 815, and 830 to 850; these read TGFPGAAGRT, PQGIIGAPGIIG, GPPGARGPPGAVGAPGVNGAPGE, NAGPVGAVGAP, and PGPVGSVGPVGAVGPRGPSGP.

The protein belongs to the fibrillar collagen family. In terms of assembly, trimers of one alpha 2(I) and two alpha 1(I) chains. Interacts (via C-terminus) with TMEM131 (via PapD-L domain); the interaction is direct and is involved in assembly and TRAPPIII ER-to-Golgi transport complex-dependent secretion of collagen. In terms of processing, prolines at the third position of the tripeptide repeating unit (G-X-Y) are hydroxylated in some or all of the chains. As to expression, forms the fibrils of tendon, ligaments and bones. In bones, the fibrils are mineralized with calcium hydroxyapatite.

It localises to the secreted. It is found in the extracellular space. Its subcellular location is the extracellular matrix. Its function is as follows. Type I collagen is a member of group I collagen (fibrillar forming collagen). The chain is Collagen alpha-2(I) chain from Equus sp.